The primary structure comprises 1009 residues: Delphilin (1009 aa).

Disordered stretches follow at residues 28 to 82, 170 to 193, 322 to 369, 414 to 635, and 990 to 1009; these read CRSK…SNTM, EGPV…RSRS, ASPD…SRDT, ELSS…SDNN, and SETQ…PLAW. A compositionally biased stretch (basic and acidic residues) spans 44–53; sequence RSQDHHERPQ. Residues 95 to 172 enclose the PDZ domain; the sequence is TIRVYRGKKS…MPSLVVEEGP (78 aa). Residues 322 to 332 show a composition bias toward polar residues; sequence ASPDSVDSNPY. 2 stretches are compositionally biased toward low complexity: residues 334–352 and 427–439; these read SLDS…SPLP and DDST…SGSD. Pro residues-rich tracts occupy residues 441 to 455, 462 to 477, and 484 to 493; these read IPPP…PPPL, SPLP…PPPA, and IAPPPPPPRP. Positions 521–535 are enriched in low complexity; sequence SSPQPSSQPILQLHQ. Residues 557–602 are compositionally biased toward polar residues; sequence AQHTRLQHPSQSIYQSQQTTVPRTSPSLTKQKSLHSQPSQQSFEGT. Over residues 607–628 the composition is skewed to pro residues; the sequence is VPPPPPPPLPPPCDPPPLPKPS. The FH2 domain maps to 629–1009; sequence PKASDNNHMS…SPRIASPLAW (381 aa).

The protein localises to the postsynaptic cell membrane. Functionally, postsynaptic scaffolding protein. The sequence is that of Delphilin (grid2ip) from Danio rerio (Zebrafish).